A 102-amino-acid chain; its full sequence is MSSPPEGKLETKAGHPPAVKAGGMRIVQKHPHTGDGKEERDKDDQEWESTSPPKPTVFISGVIARGDKDFPPAAAQVAHQKPHASMDKHVSPRTQHIQQPRK.

Residues 1-102 (MSSPPEGKLE…RTQHIQQPRK (102 aa)) are disordered. Ser-2 carries the post-translational modification N-acetylserine. Phosphoserine; by MTOR is present on Ser-3. Lys-29 bears the N6-acetyllysine mark. The segment covering 32 to 43 (HTGDGKEERDKD) has biased composition (basic and acidic residues). 3 positions are modified to phosphoserine: Ser-49, Ser-51, and Ser-91. Polar residues predominate over residues 92–102 (PRTQHIQQPRK).

It belongs to the DAP-DAPL1 family. Associates with ribosomes; inhibiting translation. Interacts with eiF5a (EIF5A and EIF5A2); inhibiting translation. Phosphorylated. Phosphorylation by MTOR inhibits the suppressive activity of DAP toward autophagy.

Functionally, ribosome-binding protein involved in ribosome hibernation, a process during which ribosomes are stabilized in an inactive state and preserved from proteasomal degradation. Acts via its association with eiF5a (EIF5A and EIF5A2) at the polypeptide exit tunnel of the ribosome, preventing mRNA translation. Involved in ribosome hibernation in the mature oocyte by preventing mRNA translation, leading to ribosome inactivation. Ribosomes, which are produced in large quantities during oogenesis, are stored and translationally repressed in the oocyte and early embryo. Also acts as a negative regulator of autophagy. Involved in mediating interferon-gamma-induced cell death. In Mus musculus (Mouse), this protein is Death-associated protein 1 (Dap).